The following is a 216-amino-acid chain: 2',3'-cyclic-nucleotide 3'-phosphodiesterase (216 aa).

His39 serves as the catalytic Proton donor/acceptor. Residue Thr41 participates in substrate binding. His137 acts as the Proton donor/acceptor in catalysis. The substrate site is built by Ser139 and Tyr142.

The protein belongs to the 2H phosphoesterase superfamily. CPD1 family.

Its subcellular location is the golgi apparatus. The enzyme catalyses a nucleoside 2',3'-cyclic phosphate + H2O = a nucleoside 2'-phosphate + H(+). Its function is as follows. Involved in the metabolism of ADP-ribose 1',2'-cyclic phosphate which is produced as a consequence of tRNA splicing. The chain is 2',3'-cyclic-nucleotide 3'-phosphodiesterase (CPD1) from Eremothecium gossypii (strain ATCC 10895 / CBS 109.51 / FGSC 9923 / NRRL Y-1056) (Yeast).